Here is a 126-residue protein sequence, read N- to C-terminus: Small ribosomal subunit protein uS13 (126 aa).

A disordered region spans residues proline 98–lysine 126. The span at alanine 108–lysine 126 shows a compositional bias: basic residues.

The protein belongs to the universal ribosomal protein uS13 family. Part of the 30S ribosomal subunit. Forms a loose heterodimer with protein S19. Forms two bridges to the 50S subunit in the 70S ribosome.

In terms of biological role, located at the top of the head of the 30S subunit, it contacts several helices of the 16S rRNA. In the 70S ribosome it contacts the 23S rRNA (bridge B1a) and protein L5 of the 50S subunit (bridge B1b), connecting the 2 subunits; these bridges are implicated in subunit movement. Contacts the tRNAs in the A and P-sites. The chain is Small ribosomal subunit protein uS13 from Bacteroides fragilis (strain ATCC 25285 / DSM 2151 / CCUG 4856 / JCM 11019 / LMG 10263 / NCTC 9343 / Onslow / VPI 2553 / EN-2).